Consider the following 347-residue polypeptide: UDP-N-acetylenolpyruvoylglucosamine reductase (347 aa).

An FAD-binding PCMH-type domain is found at 27 to 197 (LPARAQRLAR…TGIELRLNKM (171 aa)). R173 is a catalytic residue. Residue S247 is the Proton donor of the active site. Residue E342 is part of the active site.

It belongs to the MurB family. The cofactor is FAD.

It is found in the cytoplasm. The catalysed reaction is UDP-N-acetyl-alpha-D-muramate + NADP(+) = UDP-N-acetyl-3-O-(1-carboxyvinyl)-alpha-D-glucosamine + NADPH + H(+). It functions in the pathway cell wall biogenesis; peptidoglycan biosynthesis. Its function is as follows. Cell wall formation. The sequence is that of UDP-N-acetylenolpyruvoylglucosamine reductase from Alcanivorax borkumensis (strain ATCC 700651 / DSM 11573 / NCIMB 13689 / SK2).